Consider the following 203-residue polypeptide: Cilia- and flagella-associated protein 20 (203 aa).

It belongs to the CFAP20 family.

Its subcellular location is the nucleus. The protein resides in the cytoplasm. The protein localises to the cytoskeleton. It localises to the microtubule organizing center. It is found in the centrosome. Its subcellular location is the centriole. The protein resides in the cilium basal body. The protein localises to the cilium axoneme. Functionally, cilium- and flagellum-specific protein that plays a role in axonemal structure organization and motility. Microtubule inner protein (MIP) part of the dynein-decorated doublet microtubules (DMTs) in cilia axoneme, which is required for motile cilia beating. Involved in the regulation of the size and morphology of cilia. Required for axonemal microtubules polyglutamylation. The chain is Cilia- and flagella-associated protein 20 from Caenorhabditis briggsae.